Here is a 452-residue protein sequence, read N- to C-terminus: Enolase (452 aa).

Q167 is a binding site for (2R)-2-phosphoglycerate. E209 serves as the catalytic Proton donor. Mg(2+)-binding residues include D250, E310, and D337. Residues K362, R391, S392, and K413 each contribute to the (2R)-2-phosphoglycerate site. The active-site Proton acceptor is the K362.

Belongs to the enolase family. Mg(2+) serves as cofactor.

It localises to the cytoplasm. It is found in the secreted. The protein localises to the cell surface. The catalysed reaction is (2R)-2-phosphoglycerate = phosphoenolpyruvate + H2O. It participates in carbohydrate degradation; glycolysis; pyruvate from D-glyceraldehyde 3-phosphate: step 4/5. Its function is as follows. Catalyzes the reversible conversion of 2-phosphoglycerate (2-PG) into phosphoenolpyruvate (PEP). It is essential for the degradation of carbohydrates via glycolysis. This is Enolase from Mycoplasmopsis synoviae (strain 53) (Mycoplasma synoviae).